The chain runs to 163 residues: Anaerobic nitrite reductase HB1 (163 aa).

Positions V8–K157 constitute a Globin domain. Positions E41–S45 match the Homodimerization motif. Residues S51, K65, H69, K99, T103, and H104 each coordinate heme b. Positions D111–E123 match the Homodimerization motif.

This sequence belongs to the plant globin family. In terms of assembly, homodimer. Heme b is required as a cofactor.

The protein resides in the cytoplasm. It is found in the nucleus. It catalyses the reaction Fe(III)-heme b-[protein] + nitric oxide + H2O = Fe(II)-heme b-[protein] + nitrite + 2 H(+). Functionally, phytoglobin that reduces nitrite to nitric oxide (NO) under anoxic conditions (e.g. during flooding or in waterlogged soil). May not function as an oxygen storage or transport protein. Has an unusually high affinity for O(2) through an hexacoordinate heme iron because of a very low dissociation constant. The sequence is that of Anaerobic nitrite reductase HB1 from Gossypium hirsutum (Upland cotton).